Here is a 340-residue protein sequence, read N- to C-terminus: Uroporphyrinogen decarboxylase (340 aa).

Substrate-binding positions include 21–25 (RQAGR), phenylalanine 40, aspartate 71, tyrosine 146, serine 201, and histidine 316.

The protein belongs to the uroporphyrinogen decarboxylase family. Homodimer.

It is found in the cytoplasm. The enzyme catalyses uroporphyrinogen III + 4 H(+) = coproporphyrinogen III + 4 CO2. The protein operates within porphyrin-containing compound metabolism; protoporphyrin-IX biosynthesis; coproporphyrinogen-III from 5-aminolevulinate: step 4/4. Functionally, catalyzes the decarboxylation of four acetate groups of uroporphyrinogen-III to yield coproporphyrinogen-III. The chain is Uroporphyrinogen decarboxylase from Rickettsia bellii (strain RML369-C).